The chain runs to 196 residues: Protein GrpE (196 aa).

A disordered region spans residues 1–41 (MSSKEQKTPEGQAPEEIITEQHDDVEAVEPEVSAEQVDPRD).

The protein belongs to the GrpE family. In terms of assembly, homodimer.

The protein localises to the cytoplasm. Its function is as follows. Participates actively in the response to hyperosmotic and heat shock by preventing the aggregation of stress-denatured proteins, in association with DnaK and GrpE. It is the nucleotide exchange factor for DnaK and may function as a thermosensor. Unfolded proteins bind initially to DnaJ; upon interaction with the DnaJ-bound protein, DnaK hydrolyzes its bound ATP, resulting in the formation of a stable complex. GrpE releases ADP from DnaK; ATP binding to DnaK triggers the release of the substrate protein, thus completing the reaction cycle. Several rounds of ATP-dependent interactions between DnaJ, DnaK and GrpE are required for fully efficient folding. The polypeptide is Protein GrpE (Klebsiella pneumoniae (strain 342)).